The primary structure comprises 296 residues: GTPase Era (296 aa).

Residues 3-170 form the Era-type G domain; the sequence is KSGFITIVGR…LELMVKYLPE (168 aa). The tract at residues 11–18 is G1; the sequence is GRPNVGKS. 11-18 contacts GTP; sequence GRPNVGKS. A G2 region spans residues 37-41; that stretch reads QTTRN. The interval 58–61 is G3; sequence DTPG. GTP-binding positions include 58-62 and 120-123; these read DTPGI and NKVD. Residues 120–123 are G4; the sequence is NKVD. The G5 stretch occupies residues 149–151; it reads ISA. Positions 201-278 constitute a KH type-2 domain; the sequence is LSQEVPHGIA…NIKIWVKVRK (78 aa).

The protein belongs to the TRAFAC class TrmE-Era-EngA-EngB-Septin-like GTPase superfamily. Era GTPase family. As to quaternary structure, monomer.

It is found in the cytoplasm. The protein localises to the cell membrane. Its function is as follows. An essential GTPase that binds both GDP and GTP, with rapid nucleotide exchange. Plays a role in 16S rRNA processing and 30S ribosomal subunit biogenesis and possibly also in cell cycle regulation and energy metabolism. The protein is GTPase Era of Clostridium perfringens (strain ATCC 13124 / DSM 756 / JCM 1290 / NCIMB 6125 / NCTC 8237 / Type A).